The primary structure comprises 941 residues: Peroxisomal ATPase PEX6 (941 aa).

Residues 384–391 (GIPGCGKR) and 698–705 (GPPGTGKT) contribute to the ATP site.

This sequence belongs to the AAA ATPase family. Interacts with PEX1; forming the PEX1-PEX6 AAA ATPase complex, which is composed of a heterohexamer formed by a trimer of PEX1-PEX6 dimers. Interacts with APME9.

It is found in the cytoplasm. Its subcellular location is the cytosol. It localises to the peroxisome membrane. The enzyme catalyses ATP + H2O = ADP + phosphate + H(+). In terms of biological role, component of the PEX1-PEX6 AAA ATPase complex, a protein dislocase complex that mediates the ATP-dependent extraction of the PEX5 receptor from peroxisomal membranes, an essential step for PEX5 recycling. Specifically recognizes PEX5 monoubiquitinated at 'Cys-11', and pulls it out of the peroxisome lumen through the PEX2-PEX10-PEX12 retrotranslocation channel. Extraction by the PEX1-PEX6 AAA ATPase complex is accompanied by unfolding of the TPR repeats and release of bound cargo from PEX5. Required for jasmonate biosynthesis. Necessary for the developmental elimination of obsolete peroxisome matix proteins. The protein is Peroxisomal ATPase PEX6 of Arabidopsis thaliana (Mouse-ear cress).